Reading from the N-terminus, the 156-residue chain is Small ribosomal subunit protein uS7 (156 aa).

It belongs to the universal ribosomal protein uS7 family. As to quaternary structure, part of the 30S ribosomal subunit. Contacts proteins S9 and S11.

In terms of biological role, one of the primary rRNA binding proteins, it binds directly to 16S rRNA where it nucleates assembly of the head domain of the 30S subunit. Is located at the subunit interface close to the decoding center, probably blocks exit of the E-site tRNA. The polypeptide is Small ribosomal subunit protein uS7 (Yersinia enterocolitica serotype O:8 / biotype 1B (strain NCTC 13174 / 8081)).